The chain runs to 469 residues: Phenylalanine--tRNA ligase, mitochondrial (469 aa).

Residues 1–17 (MFLNRMMKTRTGLYRLY) constitute a mitochondrion transit peptide. Residues 126 to 129 (SAHE), Arg155, 162 to 164 (THY), 169 to 171 (QME), Glu302, and Phe329 contribute to the substrate site. The region spanning 372 to 469 (SKHPGSFRDV…LVKEYSVELR (98 aa)) is the FDX-ACB domain.

This sequence belongs to the class-II aminoacyl-tRNA synthetase family. In terms of assembly, monomer.

It localises to the mitochondrion matrix. It carries out the reaction tRNA(Phe) + L-phenylalanine + ATP = L-phenylalanyl-tRNA(Phe) + AMP + diphosphate + H(+). Functionally, is responsible for the charging of tRNA(Phe) with phenylalanine in mitochondrial translation. This Saccharomyces cerevisiae (strain ATCC 204508 / S288c) (Baker's yeast) protein is Phenylalanine--tRNA ligase, mitochondrial (MSF1).